The primary structure comprises 377 residues: Succinyl-diaminopimelate desuccinylase (377 aa).

Residue His66 coordinates Zn(2+). Residue Asp68 is part of the active site. Zn(2+) is bound at residue Asp99. The active-site Proton acceptor is Glu133. Zn(2+) contacts are provided by Glu134, Glu162, and His348.

It belongs to the peptidase M20A family. DapE subfamily. As to quaternary structure, homodimer. Requires Zn(2+) as cofactor. It depends on Co(2+) as a cofactor.

The catalysed reaction is N-succinyl-(2S,6S)-2,6-diaminopimelate + H2O = (2S,6S)-2,6-diaminopimelate + succinate. It participates in amino-acid biosynthesis; L-lysine biosynthesis via DAP pathway; LL-2,6-diaminopimelate from (S)-tetrahydrodipicolinate (succinylase route): step 3/3. Functionally, catalyzes the hydrolysis of N-succinyl-L,L-diaminopimelic acid (SDAP), forming succinate and LL-2,6-diaminopimelate (DAP), an intermediate involved in the bacterial biosynthesis of lysine and meso-diaminopimelic acid, an essential component of bacterial cell walls. The polypeptide is Succinyl-diaminopimelate desuccinylase (Bordetella avium (strain 197N)).